A 583-amino-acid chain; its full sequence is Proline--tRNA ligase (583 aa).

The protein belongs to the class-II aminoacyl-tRNA synthetase family. ProS type 1 subfamily. In terms of assembly, homodimer.

It is found in the cytoplasm. The catalysed reaction is tRNA(Pro) + L-proline + ATP = L-prolyl-tRNA(Pro) + AMP + diphosphate. Its function is as follows. Catalyzes the attachment of proline to tRNA(Pro) in a two-step reaction: proline is first activated by ATP to form Pro-AMP and then transferred to the acceptor end of tRNA(Pro). As ProRS can inadvertently accommodate and process non-cognate amino acids such as alanine and cysteine, to avoid such errors it has two additional distinct editing activities against alanine. One activity is designated as 'pretransfer' editing and involves the tRNA(Pro)-independent hydrolysis of activated Ala-AMP. The other activity is designated 'posttransfer' editing and involves deacylation of mischarged Ala-tRNA(Pro). The misacylated Cys-tRNA(Pro) is not edited by ProRS. The polypeptide is Proline--tRNA ligase (Acidothermus cellulolyticus (strain ATCC 43068 / DSM 8971 / 11B)).